A 1046-amino-acid chain; its full sequence is Nuclear pore complex protein NUP96 (1046 aa).

Residues 51-187 (SPDYFLKPCI…GLWKFFVPHF (137 aa)) enclose the Peptidase S59 domain. Residues 283 to 295 (RNVRPSQKIAQRN) are compositionally biased toward polar residues. Residues 283–304 (RNVRPSQKIAQRNSHQDPPPVV) are disordered. S523 carries the phosphoserine modification.

In terms of assembly, part of the nuclear pore complex (NPC). The NPC has an eight-fold symmetrical structure comprising a central transport channel and two rings, the cytoplasmic and nuclear rings, to which eight filaments are attached. The cytoplasmic filaments have loose ends, while the nuclear filaments are joined in a distal ring, forming a nuclear basket. NPCs are highly dynamic in configuration and composition, and can be devided in 3 subcomplexes, the NUP62 subcomplex, the NUP107-160 subcomplex and the NUP93 subcomplex, containing approximately 30 different nucleoporin proteins. Expressed in roots, leaves, stems, flowers and siliques.

Its subcellular location is the nucleus membrane. The protein localises to the nucleus. The protein resides in the nuclear pore complex. Contributes to the transfer of mature mRNA from the nucleus to the cytosol. Required for both R gene-mediated and basal disease resistance. RNA export seems to play a critical role in stress responses and regulation of plant growth and development. The polypeptide is Nuclear pore complex protein NUP96 (Arabidopsis thaliana (Mouse-ear cress)).